Here is a 428-residue protein sequence, read N- to C-terminus: Ectonucleoside triphosphate diphosphohydrolase 5 (428 aa).

An N-terminal signal peptide occupies residues 1-24; that stretch reads MTSSRLPVLLALVFSSLSPVLSHS. The Proton acceptor role is filled by E172. N-linked (GlcNAc...) asparagine glycosylation is present at N232. Cystine bridges form between C272–C303 and C363–C377.

The protein belongs to the GDA1/CD39 NTPase family. Monomer; active form. Homodimer; disulfide-linked. Homodimers are enzymatically inactive. Requires Ca(2+) as cofactor. Mg(2+) is required as a cofactor.

It localises to the endoplasmic reticulum. The protein resides in the secreted. It carries out the reaction a ribonucleoside 5'-diphosphate + H2O = a ribonucleoside 5'-phosphate + phosphate + H(+). The catalysed reaction is GDP + H2O = GMP + phosphate + H(+). It catalyses the reaction UDP + H2O = UMP + phosphate + H(+). The enzyme catalyses IDP + H2O = IMP + phosphate + H(+). It carries out the reaction CDP + H2O = CMP + phosphate + H(+). The catalysed reaction is ADP + H2O = AMP + phosphate + H(+). It participates in protein modification; protein glycosylation. Functionally, hydrolyzes nucleoside diphosphates with a preference for GDP, IDP and UDP compared to ADP and CDP. In the lumen of the endoplasmic reticulum, hydrolyzes UDP that acts as an end-product feedback inhibitor of the UDP-Glc:glycoprotein glucosyltransferases. UMP can be transported back by an UDP-sugar antiporter to the cytosol where it is consumed to regenerate UDP-glucose. Therefore, it positively regulates protein reglucosylation by clearing UDP from the ER lumen and by promoting the regeneration of UDP-glucose. Protein reglucosylation is essential to proper glycoprotein folding and quality control in the ER. In Gallus gallus (Chicken), this protein is Ectonucleoside triphosphate diphosphohydrolase 5 (ENTPD5).